Consider the following 869-residue polypeptide: AP-3 complex subunit delta (869 aa).

The residue at position 2 (serine 2) is an N-acetylserine. HEAT repeat units follow at residues 33–70 (NFIS…LHGV), 107–142 (SVML…GTHD), 143–179 (LARD…KYHD), 180–216 (AVKV…KDPQ), 218–254 (CLPL…IEPR), 292–329 (AAVK…KHLW), and 330–366 (AVLE…EDNV). The segment at 738 to 869 (ISQDSFNPKR…EQVIIPDFLL (132 aa)) is disordered. The span at 769–780 (ITPQAKTNIQTA) shows a compositional bias: polar residues. Residues 815 to 830 (QEKEESSRIENHQNSE) show a composition bias toward basic and acidic residues. Residues 831 to 850 (KKKKKKKKKKGEGSSKHKSR) are compositionally biased toward basic residues.

This sequence belongs to the adaptor complexes large subunit family. In terms of assembly, adaptor protein complex 3 (AP-3) is a heterotetramer composed of two large adaptins (delta-type subunit and beta-type subunit), a medium adaptin (mu-type subunit) and a small adaptin (sigma-type subunit). Binds to EPSIN2.

It is found in the cytoplasm. The protein resides in the golgi apparatus membrane. In terms of biological role, part of the AP-3 complex, an adaptor-related complex which seems to be clathrin-associated. The complex is associated with the Golgi region as well as more peripheral structures. It facilitates the budding of vesicles from the Golgi membrane and may be directly involved in trafficking to the vacuole. It also function in maintaining the identity of lytic vacuoles and in regulating the transition between storage and lytic vacuoles. The protein is AP-3 complex subunit delta (DELTA-ADR) of Arabidopsis thaliana (Mouse-ear cress).